A 205-amino-acid chain; its full sequence is ATP-dependent Clp protease proteolytic subunit (205 aa).

Ser-98 functions as the Nucleophile in the catalytic mechanism. His-123 is an active-site residue.

The protein belongs to the peptidase S14 family. In terms of assembly, fourteen ClpP subunits assemble into 2 heptameric rings which stack back to back to give a disk-like structure with a central cavity, resembling the structure of eukaryotic proteasomes.

It is found in the cytoplasm. The catalysed reaction is Hydrolysis of proteins to small peptides in the presence of ATP and magnesium. alpha-casein is the usual test substrate. In the absence of ATP, only oligopeptides shorter than five residues are hydrolyzed (such as succinyl-Leu-Tyr-|-NHMec, and Leu-Tyr-Leu-|-Tyr-Trp, in which cleavage of the -Tyr-|-Leu- and -Tyr-|-Trp bonds also occurs).. Functionally, cleaves peptides in various proteins in a process that requires ATP hydrolysis. Has a chymotrypsin-like activity. Plays a major role in the degradation of misfolded proteins. In Desulfosudis oleivorans (strain DSM 6200 / JCM 39069 / Hxd3) (Desulfococcus oleovorans), this protein is ATP-dependent Clp protease proteolytic subunit.